The following is a 284-amino-acid chain: Pseudopaline exporter CntI (284 aa).

Helical transmembrane passes span Val2 to Val22, Leu34 to Leu54, Gly74 to Ala94, Ala96 to Gly116, Ala122 to Ser142, Ser147 to Ile167, Ile179 to Phe199, Gly209 to Phe229, Ile236 to Trp256, and Val259 to Ser279. EamA domains are found at residues Ser8–Val138 and Val151–Ser279.

This sequence belongs to the EamA transporter family.

The protein localises to the cell inner membrane. Functionally, transports the metallophore pseudopaline, which is involved in the acquisition of nickel and zinc, and thus enables bacterial growth inside the host, where metal access is limited. Is probably involved in the export of pseudopaline. The polypeptide is Pseudopaline exporter CntI (Pseudomonas aeruginosa (strain UCBPP-PA14)).